The primary structure comprises 70 residues: UPF0150 protein TM_1311 (70 aa).

It belongs to the UPF0150 family.

In Thermotoga maritima (strain ATCC 43589 / DSM 3109 / JCM 10099 / NBRC 100826 / MSB8), this protein is UPF0150 protein TM_1311.